Consider the following 295-residue polypeptide: 4-hydroxy-tetrahydrodipicolinate synthase (295 aa).

Position 47 (threonine 47) interacts with pyruvate. Tyrosine 135 serves as the catalytic Proton donor/acceptor. Lysine 163 serves as the catalytic Schiff-base intermediate with substrate. Isoleucine 204 provides a ligand contact to pyruvate.

The protein belongs to the DapA family. In terms of assembly, homotetramer; dimer of dimers.

The protein resides in the cytoplasm. The catalysed reaction is L-aspartate 4-semialdehyde + pyruvate = (2S,4S)-4-hydroxy-2,3,4,5-tetrahydrodipicolinate + H2O + H(+). It participates in amino-acid biosynthesis; L-lysine biosynthesis via DAP pathway; (S)-tetrahydrodipicolinate from L-aspartate: step 3/4. Catalyzes the condensation of (S)-aspartate-beta-semialdehyde [(S)-ASA] and pyruvate to 4-hydroxy-tetrahydrodipicolinate (HTPA). The protein is 4-hydroxy-tetrahydrodipicolinate synthase of Caldicellulosiruptor saccharolyticus (strain ATCC 43494 / DSM 8903 / Tp8T 6331).